The following is a 290-amino-acid chain: Ig delta chain C region membrane-bound form (290 aa).

Residues 5-105 enclose the Ig-like 1 domain; it reads PDMFLLSECK…WDSQSSKRVT (101 aa). A disulfide bridge connects residues Cys26 and Cys78. 2 N-linked (GlcNAc...) asparagine glycosylation sites follow: Asn58 and Asn75. Residues 89–111 form a disordered region; that stretch reads PFKFPESWDSQSSKRVTPTLQAK. Polar residues predominate over residues 96–111; that stretch reads WDSQSSKRVTPTLQAK. Asn112, Asn135, and Asn227 each carry an N-linked (GlcNAc...) asparagine glycan. The Ig-like 2 domain maps to 133 to 233; it reads PSNLTVNILT…TKLNASKSLA (101 aa). A helical transmembrane segment spans residues 262–279; it reads GLWPTMCTFVALFLLTLL. The Cytoplasmic portion of the chain corresponds to 280 to 290; that stretch reads YSGFVTFIKVK.

Cell lines producing IgD contain several mRNA species for Ig delta chains. In plasmacytomas, the secreted form is the major component, and the membrane-bound form is a minor component. In spleen, however, the membrane-bound form is the major component. These two forms differ in their C-terminal segments.

Its subcellular location is the cell membrane. This Mus musculus (Mouse) protein is Ig delta chain C region membrane-bound form.